The sequence spans 117 residues: Large ribosomal subunit protein bL20c (117 aa).

This sequence belongs to the bacterial ribosomal protein bL20 family.

The protein localises to the plastid. Its subcellular location is the chloroplast. Functionally, binds directly to 23S ribosomal RNA and is necessary for the in vitro assembly process of the 50S ribosomal subunit. It is not involved in the protein synthesizing functions of that subunit. This chain is Large ribosomal subunit protein bL20c, found in Draba nemorosa (Woodland whitlowgrass).